Here is a 311-residue protein sequence, read N- to C-terminus: Protoheme IX farnesyltransferase 1 (311 aa).

A run of 9 helical transmembrane segments spans residues 31–51 (VMAL…GAVN), 52–72 (PVIA…AGAL), 97–117 (VTPG…VMTL), 119–139 (VLVG…YIVI), 152–172 (IVIG…AATG), 179–199 (LVLF…LALF), 225–245 (ILAY…FGFT), 247–267 (GYYG…SWKV), and 281–301 (LFAY…ADTI).

Belongs to the UbiA prenyltransferase family. Protoheme IX farnesyltransferase subfamily.

The protein resides in the cell inner membrane. It carries out the reaction heme b + (2E,6E)-farnesyl diphosphate + H2O = Fe(II)-heme o + diphosphate. Its pathway is porphyrin-containing compound metabolism; heme O biosynthesis; heme O from protoheme: step 1/1. Functionally, converts heme B (protoheme IX) to heme O by substitution of the vinyl group on carbon 2 of heme B porphyrin ring with a hydroxyethyl farnesyl side group. This is Protoheme IX farnesyltransferase 1 from Mesorhizobium japonicum (strain LMG 29417 / CECT 9101 / MAFF 303099) (Mesorhizobium loti (strain MAFF 303099)).